A 236-amino-acid polypeptide reads, in one-letter code: Ureidoacrylate amidohydrolase RutB (236 aa).

The active-site Proton acceptor is the Asp-24. Lys-133 is a catalytic residue. The Nucleophile role is filled by Cys-166.

The protein belongs to the isochorismatase family. RutB subfamily.

The catalysed reaction is (Z)-3-ureidoacrylate + H2O + H(+) = (Z)-3-aminoacrylate + NH4(+) + CO2. It catalyses the reaction (Z)-3-ureidoacrylate + H2O = (Z)-3-aminoacrylate + carbamate + H(+). It carries out the reaction (Z)-2-methylureidoacrylate + H2O + H(+) = (Z)-2-methylaminoacrylate + NH4(+) + CO2. Functionally, hydrolyzes ureidoacrylate to form aminoacrylate and carbamate. The carbamate hydrolyzes spontaneously, thereby releasing one of the nitrogen atoms of the pyrimidine ring as ammonia and one of its carbon atoms as CO2. This chain is Ureidoacrylate amidohydrolase RutB, found in Klebsiella pneumoniae subsp. pneumoniae (strain ATCC 700721 / MGH 78578).